Reading from the N-terminus, the 261-residue chain is Cytochrome c oxidase subunit 3 (261 aa).

The Mitochondrial matrix portion of the chain corresponds to 1-15; the sequence is MTHQTHAYHMVNPSP. The helical transmembrane segment at 16–34 threads the bilayer; that stretch reads WPLTGALSALLMTSGLIMW. Over 35–40 the chain is Mitochondrial intermembrane; the sequence is FHFNST. The chain crosses the membrane as a helical span at residues 41–66; it reads TLLTLGLTTNMLTMYQWWRDVIREST. The Mitochondrial matrix segment spans residues 67–72; it reads FQGHHT. A helical transmembrane segment spans residues 73-105; it reads PTVQKGLRYGMILFIISEVLFFTGFFWAFYHSS. Residues 106-128 are Mitochondrial intermembrane-facing; the sequence is LAPTPELGGCWPPTGIHPLNPLE. Residues 129–152 traverse the membrane as a helical segment; that stretch reads VPLLNTSVLLASGVSITWAHHSLM. Topologically, residues 153–155 are mitochondrial matrix; it reads EGN. A helical transmembrane segment spans residues 156–183; it reads RNPMLQALFITIALGIYFTLLQASEYYE. Topologically, residues 184–190 are mitochondrial intermembrane; that stretch reads APFTISD. The helical transmembrane segment at 191–223 threads the bilayer; the sequence is GVYGSTFFVATGFHGLHVIIGSTFLIVCFFRQL. Topologically, residues 224-232 are mitochondrial matrix; the sequence is KFHFTSNHH. The helical transmembrane segment at 233 to 256 threads the bilayer; sequence FGFEAAAWYWHFVDVVWLFLYVSI. The Mitochondrial intermembrane portion of the chain corresponds to 257-261; that stretch reads YWWGS.

This sequence belongs to the cytochrome c oxidase subunit 3 family. As to quaternary structure, component of the cytochrome c oxidase (complex IV, CIV), a multisubunit enzyme composed of 14 subunits. The complex is composed of a catalytic core of 3 subunits MT-CO1, MT-CO2 and MT-CO3, encoded in the mitochondrial DNA, and 11 supernumerary subunits COX4I, COX5A, COX5B, COX6A, COX6B, COX6C, COX7A, COX7B, COX7C, COX8 and NDUFA4, which are encoded in the nuclear genome. The complex exists as a monomer or a dimer and forms supercomplexes (SCs) in the inner mitochondrial membrane with NADH-ubiquinone oxidoreductase (complex I, CI) and ubiquinol-cytochrome c oxidoreductase (cytochrome b-c1 complex, complex III, CIII), resulting in different assemblies (supercomplex SCI(1)III(2)IV(1) and megacomplex MCI(2)III(2)IV(2)).

The protein localises to the mitochondrion inner membrane. The catalysed reaction is 4 Fe(II)-[cytochrome c] + O2 + 8 H(+)(in) = 4 Fe(III)-[cytochrome c] + 2 H2O + 4 H(+)(out). Its function is as follows. Component of the cytochrome c oxidase, the last enzyme in the mitochondrial electron transport chain which drives oxidative phosphorylation. The respiratory chain contains 3 multisubunit complexes succinate dehydrogenase (complex II, CII), ubiquinol-cytochrome c oxidoreductase (cytochrome b-c1 complex, complex III, CIII) and cytochrome c oxidase (complex IV, CIV), that cooperate to transfer electrons derived from NADH and succinate to molecular oxygen, creating an electrochemical gradient over the inner membrane that drives transmembrane transport and the ATP synthase. Cytochrome c oxidase is the component of the respiratory chain that catalyzes the reduction of oxygen to water. Electrons originating from reduced cytochrome c in the intermembrane space (IMS) are transferred via the dinuclear copper A center (CU(A)) of subunit 2 and heme A of subunit 1 to the active site in subunit 1, a binuclear center (BNC) formed by heme A3 and copper B (CU(B)). The BNC reduces molecular oxygen to 2 water molecules using 4 electrons from cytochrome c in the IMS and 4 protons from the mitochondrial matrix. The chain is Cytochrome c oxidase subunit 3 (MT-CO3) from Madoqua guentheri (Guenther's dik-dik).